We begin with the raw amino-acid sequence, 370 residues long: Probable butyrate kinase (370 aa).

The protein belongs to the acetokinase family.

Its subcellular location is the cytoplasm. The catalysed reaction is butanoate + ATP = butanoyl phosphate + ADP. In Elusimicrobium minutum (strain Pei191), this protein is Probable butyrate kinase.